A 254-amino-acid polypeptide reads, in one-letter code: NAD kinase (254 aa).

Aspartate 44 functions as the Proton acceptor in the catalytic mechanism. Residues 44–45 (DG), 114–115 (NE), aspartate 144, alanine 152, 155–160 (TAYNYS), and alanine 179 contribute to the NAD(+) site.

This sequence belongs to the NAD kinase family. A divalent metal cation is required as a cofactor.

The protein localises to the cytoplasm. It catalyses the reaction NAD(+) + ATP = ADP + NADP(+) + H(+). In terms of biological role, involved in the regulation of the intracellular balance of NAD and NADP, and is a key enzyme in the biosynthesis of NADP. Catalyzes specifically the phosphorylation on 2'-hydroxyl of the adenosine moiety of NAD to yield NADP. The sequence is that of NAD kinase from Cereibacter sphaeroides (strain ATCC 17025 / ATH 2.4.3) (Rhodobacter sphaeroides).